A 454-amino-acid chain; its full sequence is tRNA modification GTPase MnmE (454 aa).

(6S)-5-formyl-5,6,7,8-tetrahydrofolate is bound by residues Arg-23, Glu-80, and Lys-120. In terms of domain architecture, TrmE-type G spans 216 to 377; sequence GMKVVIAGRP…LRNHLKQSMG (162 aa). Asn-226 contacts K(+). Residues 226–231, 245–251, 270–273, 335–338, and 358–360 each bind GTP; these read NAGKSS, TDIAGTT, DTAG, NKAD, and SAR. Residue Ser-230 participates in Mg(2+) binding. Positions 245, 247, and 250 each coordinate K(+). Position 251 (Thr-251) interacts with Mg(2+). Lys-454 is a (6S)-5-formyl-5,6,7,8-tetrahydrofolate binding site.

Belongs to the TRAFAC class TrmE-Era-EngA-EngB-Septin-like GTPase superfamily. TrmE GTPase family. In terms of assembly, homodimer. Heterotetramer of two MnmE and two MnmG subunits. K(+) serves as cofactor.

It localises to the cytoplasm. Its function is as follows. Exhibits a very high intrinsic GTPase hydrolysis rate. Involved in the addition of a carboxymethylaminomethyl (cmnm) group at the wobble position (U34) of certain tRNAs, forming tRNA-cmnm(5)s(2)U34. This Escherichia coli O6:K15:H31 (strain 536 / UPEC) protein is tRNA modification GTPase MnmE.